Consider the following 725-residue polypeptide: Glutamine-dependent NAD(+) synthetase (725 aa).

The region spanning 4–274 (LKVATCNLNQ…VEVIISQVDL (271 aa)) is the CN hydrolase domain. Glutamate 44 serves as the catalytic Proton acceptor; for glutaminase activity. The active-site For glutaminase activity is the lysine 113. Cysteine 174 (nucleophile; for glutaminase activity) is an active-site residue. A ligase region spans residues 324–709 (YHSPQEEIAF…FPEEEANSNK (386 aa)). ATP is bound at residue 354–361 (PLSGGADS). Serine 356 is an active-site residue.

In the C-terminal section; belongs to the NAD synthetase family.

The catalysed reaction is deamido-NAD(+) + L-glutamine + ATP + H2O = L-glutamate + AMP + diphosphate + NAD(+) + H(+). Its pathway is cofactor biosynthesis; NAD(+) biosynthesis; NAD(+) from deamido-NAD(+) (L-Gln route): step 1/1. This chain is Glutamine-dependent NAD(+) synthetase, found in Arabidopsis thaliana (Mouse-ear cress).